A 495-amino-acid polypeptide reads, in one-letter code: Sialin (495 aa).

Residues 1-24 (MKSPVSDLAPSDGEEGSDRTPLLQ) form a disordered region. Ser-3 carries the phosphoserine modification. Residues 22-23 (LL) carry the Dileucine internalization motif motif. Residues 42–62 (LAFLSFFGFFVLYSLRVNLSV) form a helical membrane-spanning segment. N-linked (GlcNAc...) asparagine glycans are attached at residues Asn-71, Asn-77, and Asn-95. 11 helical membrane-spanning segments follow: residues 110–130 (WILG…GYVA), 137–157 (LLLG…PLAA), 159–179 (FGVG…GVTY), 201–221 (ISYA…GVIC), 228–248 (YVFY…ICLV), 289–309 (LPLW…YTLL), 329–349 (FLSA…GQAA), 366–386 (VFSL…GFIG), 392–412 (AVAF…GFSI), 424–444 (ILLG…PIIA), and 458–478 (TVFC…TLFA).

This sequence belongs to the major facilitator superfamily. Sodium/anion cotransporter family. In terms of tissue distribution, significantly expressed in lung endothelial cells, and much less in liver.

It localises to the basolateral cell membrane. The protein localises to the cytoplasmic vesicle. The protein resides in the secretory vesicle. It is found in the synaptic vesicle membrane. Its subcellular location is the lysosome membrane. The enzyme catalyses N-acetylneuraminate(in) + H(+)(in) = N-acetylneuraminate(out) + H(+)(out). It catalyses the reaction D-glucuronate(out) + H(+)(out) = D-glucuronate(in) + H(+)(in). The catalysed reaction is 2 nitrate(out) + H(+)(out) = 2 nitrate(in) + H(+)(in). It carries out the reaction L-aspartate(out) = L-aspartate(in). The enzyme catalyses L-glutamate(out) = L-glutamate(in). It catalyses the reaction N-acetyl-L-aspartyl-L-glutamate(out) = N-acetyl-L-aspartyl-L-glutamate(in). Multifunctional anion transporter that operates via two distinct transport mechanisms, namely proton-coupled anion cotransport and membrane potential-dependent anion transport. Electroneutral proton-coupled acidic monosaccharide symporter, with a sugar to proton stoichiometry of 1:1. Exports glucuronic acid and free sialic acid derived from sialoglycoconjugate degradation out of lysosomes, driven by outwardly directed lysosomal pH gradient. May regulate lysosome function and metabolism of sialylated conjugates that impact oligodendrocyte lineage differentiation and myelinogenesis in the central nervous system. Electrogenic proton-coupled nitrate symporter that transports nitrate ions across the basolateral membrane of salivary gland acinar cells, with nitrate to proton stoichiometry of 2:1. May contribute to nitrate clearance from serum by salivary glands, where it is further concentrated and secreted in the saliva. Uses membrane potential to drive the uptake of acidic amino acids and peptides into synaptic vesicles. Responsible for synaptic vesicular storage of L-aspartate and L-glutamate in pinealocytes as well as vesicular uptake of N-acetyl-L-aspartyl-L-glutamate neuropeptide, relevant to aspartegic-associated glutamatergic neurotransmission and activation of metabotropic receptors that inhibit subsequent transmitter release. Functionally, receptor for CM101, a polysaccharide produced by group B Streptococcus with antipathoangiogenic properties. The sequence is that of Sialin (SLC17A5) from Ovis aries (Sheep).